The chain runs to 442 residues: Armadillo-like helical domain containing protein 1 (442 aa).

The polypeptide is Armadillo-like helical domain containing protein 1 (Bos taurus (Bovine)).